Consider the following 55-residue polypeptide: Ribosome modulation factor (55 aa).

Belongs to the ribosome modulation factor family. As to quaternary structure, associates exclusively with 100S ribosomes.

The protein localises to the cytoplasm. Functionally, during stationary phase, converts 70S ribosomes to an inactive dimeric form (100S ribosomes). May form immature 90S particles, which are converted to mature 100S ribosomes by the hibernation promoting factor Hpf. The sequence is that of Ribosome modulation factor from Escherichia coli O157:H7.